Reading from the N-terminus, the 127-residue chain is Prefoldin subunit 6 (127 aa).

A2 carries the N-acetylalanine modification. K21 carries the N6-acetyllysine modification. K66 bears the N6-acetyllysine; alternate mark. K66 participates in a covalent cross-link: Glycyl lysine isopeptide (Lys-Gly) (interchain with G-Cter in SUMO1); alternate. K66 participates in a covalent cross-link: Glycyl lysine isopeptide (Lys-Gly) (interchain with G-Cter in SUMO2); alternate.

The protein belongs to the prefoldin subunit beta family. As to quaternary structure, heterohexamer of two PFD-alpha type and four PFD-beta type subunits. Component of the PAQosome complex which is responsible for the biogenesis of several protein complexes and which consists of R2TP complex members RUVBL1, RUVBL2, RPAP3 and PIH1D1, URI complex members PFDN2, PFDN6, PDRG1, UXT and URI1 as well as ASDURF, POLR2E and DNAAF10/WDR92.

In terms of biological role, binds specifically to cytosolic chaperonin (c-CPN) and transfers target proteins to it. Binds to nascent polypeptide chain and promotes folding in an environment in which there are many competing pathways for nonnative proteins. The protein is Prefoldin subunit 6 (Pfdn6) of Mus musculus (Mouse).